The following is a 559-amino-acid chain: Dihydroxy-acid dehydratase (559 aa).

Position 80 (Asp80) interacts with Mg(2+). [2Fe-2S] cluster is bound at residue Cys121. The Mg(2+) site is built by Asp122 and Lys123. The residue at position 123 (Lys123) is an N6-carboxylysine. A [2Fe-2S] cluster-binding site is contributed by Cys194. Position 447 (Glu447) interacts with Mg(2+). Residue Ser473 is the Proton acceptor of the active site.

This sequence belongs to the IlvD/Edd family. Homodimer. [2Fe-2S] cluster is required as a cofactor. The cofactor is Mg(2+).

It carries out the reaction (2R)-2,3-dihydroxy-3-methylbutanoate = 3-methyl-2-oxobutanoate + H2O. It catalyses the reaction (2R,3R)-2,3-dihydroxy-3-methylpentanoate = (S)-3-methyl-2-oxopentanoate + H2O. Its pathway is amino-acid biosynthesis; L-isoleucine biosynthesis; L-isoleucine from 2-oxobutanoate: step 3/4. It functions in the pathway amino-acid biosynthesis; L-valine biosynthesis; L-valine from pyruvate: step 3/4. Functionally, functions in the biosynthesis of branched-chain amino acids. Catalyzes the dehydration of (2R,3R)-2,3-dihydroxy-3-methylpentanoate (2,3-dihydroxy-3-methylvalerate) into 2-oxo-3-methylpentanoate (2-oxo-3-methylvalerate) and of (2R)-2,3-dihydroxy-3-methylbutanoate (2,3-dihydroxyisovalerate) into 2-oxo-3-methylbutanoate (2-oxoisovalerate), the penultimate precursor to L-isoleucine and L-valine, respectively. This Chlorobium chlorochromatii (strain CaD3) protein is Dihydroxy-acid dehydratase.